The chain runs to 465 residues: Lactaldehyde dehydrogenase (465 aa).

Residue Gly-220–Gly-225 participates in NAD(+) binding. Residues Glu-240 and Cys-274 contribute to the active site.

The protein belongs to the aldehyde dehydrogenase family. As to quaternary structure, homotetramer.

It carries out the reaction (S)-lactaldehyde + NAD(+) + H2O = (S)-lactate + NADH + 2 H(+). It functions in the pathway cofactor biosynthesis; coenzyme F420 biosynthesis. In terms of biological role, involved in F420 biosynthesis through the oxidation of lactaldehyde to lactate. The sequence is that of Lactaldehyde dehydrogenase from Methanococcus aeolicus (strain ATCC BAA-1280 / DSM 17508 / OCM 812 / Nankai-3).